A 1107-amino-acid polypeptide reads, in one-letter code: Rho GTPase-activating protein 39 (1107 aa).

A disordered region spans residues Met1 to Ile21. Ser2 carries the N-acetylserine modification. Residues Tyr7 to Pro19 show a composition bias toward basic and acidic residues. WW domains lie at Ser25–Gly58 and Arg63–Asn97. A compositionally biased stretch (polar residues) spans Gln111 to Asn122. Disordered regions lie at residues Gln111–Val173, Pro218–Arg267, Ser282–Glu311, and Met326–Thr370. A compositionally biased stretch (low complexity) spans Ser123–Ser136. The span at Ser242–Val254 shows a compositional bias: polar residues. Phosphoserine is present on Ser282. 2 stretches are compositionally biased toward polar residues: residues Glu331 to Arg343 and Leu353 to Arg369. A phosphoserine mark is found at Ser380, Ser384, Ser402, and Ser403. Disordered stretches follow at residues Pro404–Pro429, Ser441–Leu529, and Met563–Pro585. The span at Ser470 to Ser484 shows a compositional bias: polar residues. A phosphoserine mark is found at Ser597, Ser683, Ser708, and Ser719. Residues Trp715–Ala867 enclose the MyTH4 domain. The Rho-GAP domain occupies Ser914 to Phe1102.

It is found in the nucleus. This chain is Rho GTPase-activating protein 39 (Arhgap39), found in Mus musculus (Mouse).